The chain runs to 142 residues: Ornithine decarboxylase antizyme (142 aa).

Low complexity predominate over residues 1–19 (MSSSIVLSNNNSNSNSMSM). The disordered stretch occupies residues 1 to 34 (MSSSIVLSNNNSNSNSMSMIGQSPPCCSDVPNTP).

The protein belongs to the ODC antizyme family. Interacts with ODC1 and thereby sterically blocks ODC homodimerization.

In terms of biological role, ornithine decarboxylase (ODC) antizyme protein that negatively regulates ODC activity and intracellular polyamine biosynthesis and uptake in response to increased intracellular polyamine levels. Binds to ODC monomers, inhibiting the assembly of the functional ODC homodimer, and targets the monomers for ubiquitin-independent proteolytic destruction by the 26S proteasome. The protein is Ornithine decarboxylase antizyme of Pristionchus pacificus (Parasitic nematode).